We begin with the raw amino-acid sequence, 215 residues long: uncharacterized protein (215 aa).

Belongs to the thiaminase-2 family.

This is an uncharacterized protein from Haemophilus influenzae (strain ATCC 51907 / DSM 11121 / KW20 / Rd).